The sequence spans 179 residues: Large ribosomal subunit protein uL5 (179 aa).

It belongs to the universal ribosomal protein uL5 family. Part of the 50S ribosomal subunit; part of the 5S rRNA/L5/L18/L25 subcomplex. Contacts the 5S rRNA and the P site tRNA. Forms a bridge to the 30S subunit in the 70S ribosome.

In terms of biological role, this is one of the proteins that bind and probably mediate the attachment of the 5S RNA into the large ribosomal subunit, where it forms part of the central protuberance. In the 70S ribosome it contacts protein S13 of the 30S subunit (bridge B1b), connecting the 2 subunits; this bridge is implicated in subunit movement. Contacts the P site tRNA; the 5S rRNA and some of its associated proteins might help stabilize positioning of ribosome-bound tRNAs. This Prochlorococcus marinus (strain MIT 9312) protein is Large ribosomal subunit protein uL5.